A 457-amino-acid chain; its full sequence is MEGTDLVVKLLSTWLTLVGSLILLPSAFGLSLGISEIYMKILVKTLEWATLRIEKGAPKESVLKSPASMGIIQRDESPMEKGLSGLRGRDFELSDVFYFSKKGLEAIVEDEVTQRFSSEELVSWNLLTRTNVNFHYISPKLTIVWVLGVLVRYCFLLPLRVTLAFIGISLLIIGTTLVGQLPDSSLKNWLSELVHLTCCRICVRSLSGTIHYHNKQYRPQKGGICVANHTSPIDVLILATDGCYAMVGQVHGGLMGIIQRAMVKACPHVWFERSEIKDRHLVTKRLKEHIADKKKLPILIFPEGTCINNTSVMMFKKGSFEIGGTIYPVAIKYNPQFGDAFWNSSKYNLVSYLLRIMTSWAIVCDVWYMPPMTREEGEDAVQFANRVKSAIAVQGGLTELPWDGGLKRAKVKDTFKEEQQKTYSKMIVGNGSPSLALDSSTVDNHGSPEPAFRSESL.

A helical transmembrane segment spans residues 14–34 (WLTLVGSLILLPSAFGLSLGI). Ser-68 and Ser-77 each carry phosphoserine. 2 helical membrane-spanning segments follow: residues 137–157 (ISPKLTIVWVLGVLVRYCFLL) and 161–181 (VTLAFIGISLLIIGTTLVGQL). The HXXXXD motif signature appears at 229–234 (HTSPID). The disordered stretch occupies residues 429–457 (GNGSPSLALDSSTVDNHGSPEPAFRSESL). The span at 431–444 (GSPSLALDSSTVDN) shows a compositional bias: polar residues.

Belongs to the 1-acyl-sn-glycerol-3-phosphate acyltransferase family.

The protein resides in the endoplasmic reticulum membrane. It catalyses the reaction sn-glycerol 3-phosphate + an acyl-CoA = a 1-acyl-sn-glycero-3-phosphate + CoA. The enzyme catalyses a 1-acyl-sn-glycero-3-phosphate + an acyl-CoA = a 1,2-diacyl-sn-glycero-3-phosphate + CoA. It carries out the reaction dodecanoyl-CoA + sn-glycerol 3-phosphate = 1-dodecanoyl-sn-glycerol 3-phosphate + CoA. The catalysed reaction is sn-glycerol 3-phosphate + hexadecanoyl-CoA = 1-hexadecanoyl-sn-glycero-3-phosphate + CoA. It catalyses the reaction sn-glycerol 3-phosphate + (9Z)-octadecenoyl-CoA = 1-(9Z-octadecenoyl)-sn-glycero-3-phosphate + CoA. The enzyme catalyses (9Z,12Z)-octadecadienoyl-CoA + sn-glycerol 3-phosphate = 1-(9Z,12Z)-octadecadienoyl-sn-glycero-3-phosphate + CoA. It carries out the reaction 1-tetradecanoyl-sn-glycerol 3-phosphate + (9Z)-octadecenoyl-CoA = 1-tetradecanoyl-2-(9Z)-octadecenoyl-sn-glycero-3-phosphate + CoA. The catalysed reaction is 1-hexadecanoyl-sn-glycero-3-phosphate + (9Z)-octadecenoyl-CoA = 1-hexadecanoyl-2-(9Z-octadecenoyl)-sn-glycero-3-phosphate + CoA. It catalyses the reaction 1-(9Z-octadecenoyl)-sn-glycero-3-phosphate + (9Z)-octadecenoyl-CoA = 1,2-di-(9Z-octadecenoyl)-sn-glycero-3-phosphate + CoA. The enzyme catalyses 1-(6Z,9Z,12Z-octadecatrienoyl)-sn-glycero-3-phosphate + (9Z)-octadecenoyl-CoA = (6Z,9Z,12Z)-octadecatrienoyl-2-(9Z)-octadecenoyl-sn-glycero-3-phosphate + CoA. It carries out the reaction 1-(9Z,12Z,15Z)-octadecatrienoyl-sn-glycero-3-phosphate + (9Z)-octadecenoyl-CoA = 1-(9Z,12Z,15Z)-octadecatrienoyl-2-(9Z)-octadecenoyl-sn-glycero-3-phosphate + CoA. The catalysed reaction is 1-(9Z-octadecenoyl)-sn-glycero-3-phosphate + tetradecanoyl-CoA = 1-(9Z)-octadecenoyl-2-tetradecanoyl-sn-glycero-3-phosphate + CoA. It catalyses the reaction 1-(9Z-octadecenoyl)-sn-glycero-3-phosphate + hexadecanoyl-CoA = 1-(9Z)-octadecenoyl-2-hexadecanoyl-sn-glycero-3-phosphate + CoA. The enzyme catalyses 1-(9Z-octadecenoyl)-sn-glycero-3-phosphate + octadecanoyl-CoA = 1-(9Z-octadecenoyl)-2-octadecanoyl-sn-glycero-3-phosphate + CoA. It carries out the reaction 1-(9Z-octadecenoyl)-sn-glycero-3-phosphate + (9Z,12Z)-octadecadienoyl-CoA = 1-(9Z)-octadecenoyl-2-(9Z,12Z)-octadecadienoyl-sn-glycero-3-phosphate + CoA. The catalysed reaction is 1-(5Z,8Z,11Z,14Z-eicosatetraenoyl)-sn-glycero-3-phosphate + (9Z)-octadecenoyl-CoA = 1-(5Z,8Z,11Z,14Z)-eicosatetraenoyl-2-(9Z)-octadecenoyl-sn-glycero-3-phosphate + CoA. It participates in glycerolipid metabolism; triacylglycerol biosynthesis. Its pathway is phospholipid metabolism; CDP-diacylglycerol biosynthesis; CDP-diacylglycerol from sn-glycerol 3-phosphate: step 1/3. Functionally, converts glycerol-3-phosphate to 1-acyl-sn-glycerol-3-phosphate (lysophosphatidic acid or LPA) by incorporating an acyl moiety at the sn-1 position of the glycerol backbone. Also converts LPA into 1,2-diacyl-sn-glycerol-3-phosphate (phosphatidic acid or PA) by incorporating an acyl moiety at the sn-2 position of the glycerol backbone. Protects cells against lipotoxicity. This is Glycerol-3-phosphate acyltransferase 3 from Rattus norvegicus (Rat).